We begin with the raw amino-acid sequence, 418 residues long: MTPSNRGTLARTAMAYVLAGGRGSRLYELTDPRAKPAVYFGGKTRIIDFALSNAINSGIRRIGVATQYKAHSLIRHLQRGWNFMRPERNESFDILPASQRVSETQWYDGTADAVYQNGDIIADYAPEYMVILAGDHVYKMDYELMLQQHVNQNADVTVGVLEVPQREASGFGVMHVDANDRIITFLEKPDDPPGIPGAPHLSLASMGIYVFRTTYLFELLRADAADPHSSHDFGKDIIPTVVRHGKAIAHRFSTSCVRSQDESLAYWRDVGTIDAYWEANIDLTTVTPQLDLFDKDWPIWTYSELTAPAKFVHNEEGRRGHALNSLVSGGCIVSGSYLHKSLLFTGVRVHSYSHLEGAVVQPYVDIGRAARLRNVVVDRGVRIPAGLVVGEDPVLDARRFRRSARGTVLITQPMIDRL.

Residues Tyr-107, Gly-172, 187 to 188, and Ser-205 contribute to the alpha-D-glucose 1-phosphate site; that span reads EK.

The protein belongs to the bacterial/plant glucose-1-phosphate adenylyltransferase family. As to quaternary structure, homotetramer.

The catalysed reaction is alpha-D-glucose 1-phosphate + ATP + H(+) = ADP-alpha-D-glucose + diphosphate. It functions in the pathway glycan biosynthesis; glycogen biosynthesis. Its function is as follows. Involved in the biosynthesis of ADP-glucose, a building block required for the elongation reactions to produce glycogen. Catalyzes the reaction between ATP and alpha-D-glucose 1-phosphate (G1P) to produce pyrophosphate and ADP-Glc. This Gemmatimonas aurantiaca (strain DSM 14586 / JCM 11422 / NBRC 100505 / T-27) protein is Glucose-1-phosphate adenylyltransferase.